Here is a 610-residue protein sequence, read N- to C-terminus: ATP-dependent zinc metalloprotease FtsH (610 aa).

Residues 1–5 lie on the Cytoplasmic side of the membrane; that stretch reads MNRSN. Residues 6–26 form a helical membrane-spanning segment; the sequence is IWNLLFTILIIVTLFWLARFF. Residues 27 to 107 are Periplasmic-facing; sequence YVENSPVSKL…SGERSGSSSF (81 aa). The chain crosses the membrane as a helical span at residues 108–128; that stretch reads WINVLGTLIPTILFIVVWLFI. The Cytoplasmic segment spans residues 129–610; that stretch reads MRSLSGRNNQ…LSEEFEKVVE (482 aa). ATP contacts are provided by residues G164, 204 to 208, L209, H343, and E371; that span reads GTGKT. Position 423 (H423) interacts with Zn(2+). The active site involves E424. H427 and D500 together coordinate Zn(2+).

This sequence in the central section; belongs to the AAA ATPase family. It in the C-terminal section; belongs to the peptidase M41 family. The isolated ADP-bound cytosolic domain forms a 6-fold symmetric protease disk and a 2-fold symmetric AAA ATPase ring. In the absence of nucleotide the AAA ATPase ring also forms symmetric hexamers. Requires Zn(2+) as cofactor.

The protein localises to the cell inner membrane. Its function is as follows. Acts as a processive, ATP-dependent zinc metallopeptidase for both cytoplasmic and membrane proteins. Plays a role in the quality control of integral membrane proteins. This chain is ATP-dependent zinc metalloprotease FtsH, found in Thermotoga maritima (strain ATCC 43589 / DSM 3109 / JCM 10099 / NBRC 100826 / MSB8).